The chain runs to 384 residues: Opsin-3 (384 aa).

At Met-1 to Ala-62 the chain is on the extracellular side. A glycan (N-linked (GlcNAc...) asparagine) is linked at Asn-4. The helical transmembrane segment at Leu-63–Phe-83 threads the bilayer. The Cytoplasmic segment spans residues Ser-84–Asn-94. Residues Met-95–Ile-115 traverse the membrane as a helical segment. The Extracellular segment spans residues Met-116–Val-132. A disulfide bridge links Cys-130 with Cys-207. A helical transmembrane segment spans residues Tyr-133–Phe-153. At Asp-154–Gln-171 the chain is on the cytoplasmic side. The helical transmembrane segment at Ala-172 to Phe-192 threads the bilayer. The Extracellular segment spans residues Arg-193–Glu-219. A helical transmembrane segment spans residues Val-220–Phe-240. Over Tyr-241–Lys-284 the chain is Cytoplasmic. Residues Val-285–Met-305 traverse the membrane as a helical segment. Residues Thr-306–Arg-312 lie on the Extracellular side of the membrane. A helical transmembrane segment spans residues Thr-313–Ile-333. Residues Asp-334–Ala-384 lie on the Cytoplasmic side of the membrane.

Belongs to the G-protein coupled receptor 1 family. Opsin subfamily. In the retina, expression is essentially uniformly distributed but a higher level is seen in the ventral region where the B-cells are localized.

The protein localises to the membrane. Functionally, visual pigments are the light-absorbing molecules that mediate vision. They consist of an apoprotein, opsin, covalently linked to cis-retinal. May play a role in photoperiodic photoreception. The chain is Opsin-3 (OP3) from Manduca sexta (Tobacco hawkmoth).